A 487-amino-acid polypeptide reads, in one-letter code: N-succinylglutamate 5-semialdehyde dehydrogenase (487 aa).

G221–G226 contacts NAD(+). Catalysis depends on residues E244 and C278.

Belongs to the aldehyde dehydrogenase family. AstD subfamily.

It catalyses the reaction N-succinyl-L-glutamate 5-semialdehyde + NAD(+) + H2O = N-succinyl-L-glutamate + NADH + 2 H(+). Its pathway is amino-acid degradation; L-arginine degradation via AST pathway; L-glutamate and succinate from L-arginine: step 4/5. Catalyzes the NAD-dependent reduction of succinylglutamate semialdehyde into succinylglutamate. The protein is N-succinylglutamate 5-semialdehyde dehydrogenase of Pseudomonas putida (strain W619).